We begin with the raw amino-acid sequence, 507 residues long: Cytochrome P450 monooxygenase helB3 (507 aa).

A signal peptide spans 1–25 (MAVATLISILFAVLALRLCYLLIHA). 3 N-linked (GlcNAc...) asparagine glycosylation sites follow: Asn111, Asn206, and Asn339. Cys435 is a heme binding site.

This sequence belongs to the cytochrome P450 family. Heme serves as cofactor.

Its pathway is mycotoxin biosynthesis. Cytochrome P450 monooxygenase; part of the gene cluster that mediates the biosynthesis of helvolic acid, an antibacterial nortriterpenoid. Protostadienol synthase helA cyclizes (3S)-oxidosqualene to (17Z)-protosta-17(20),24-dien-3-beta-ol (protostadienol). The synthesis of protostadienol is followed by several steps of monooxygenation, dehydrogenation, and acyl transfer to yield the final helvolic acid. Following the cyclization to the tetracyclic protostadienol by helA, cytochrome P450 monooxygenases helB1-mediated and helB2-mediated oxidation at C-4 and C-16, acyltransferase helD2-dependent acetylation of 16-OH, oxidation of C-21 by cytochrome P450 monooxygenase helB4, and short chain dehydrogenase helC-dependent oxidative decarboxylation yield the fusidane skeleton. This intermediate is further modified in three additional steps mediated by the cytochrome P450 monooxygenase helB3, the acyltransferase helD1, and the 3-ketosteroid 1-dehydrogenase helE to give helvolic acid. Compared with the late stages in the biosynthesis of helvolic acid, enzymes involved in the early stage modifications act in a relatively strict order. The hydroxylation of C-16 by helB1 and subsequent acetylation by helD2 should occur before the helB3-mediated oxidation of C-21. C-4 demethylation in fusidane-type antibiotics proceeds in an unusual manner though it is also achieved by oxidative decarboxylation. The methyl group at C-4 beta position is oxidized by helB1 and subsequently removed by the short chain dehydrogenase helC. This chain is Cytochrome P450 monooxygenase helB3, found in Aspergillus fumigatus (strain ATCC MYA-4609 / CBS 101355 / FGSC A1100 / Af293) (Neosartorya fumigata).